Reading from the N-terminus, the 156-residue chain is Small ribosomal subunit protein uS7 (156 aa).

The protein belongs to the universal ribosomal protein uS7 family. Part of the 30S ribosomal subunit. Contacts proteins S9 and S11.

One of the primary rRNA binding proteins, it binds directly to 16S rRNA where it nucleates assembly of the head domain of the 30S subunit. Is located at the subunit interface close to the decoding center, probably blocks exit of the E-site tRNA. This chain is Small ribosomal subunit protein uS7, found in Rhizobium johnstonii (strain DSM 114642 / LMG 32736 / 3841) (Rhizobium leguminosarum bv. viciae).